A 129-amino-acid chain; its full sequence is Phosphomevalonate dehydratase small subunit (129 aa).

The active-site Proton acceptor is the Ser61.

Belongs to the AcnX type II small subunit family. Heterodimer composed of a large subunit (PMDh-L) and a small subunit (PMDh-S).

It catalyses the reaction (R)-5-phosphomevalonate = (2E)-3-methyl-5-phosphooxypent-2-enoate + H2O. It functions in the pathway isoprenoid biosynthesis; isopentenyl diphosphate biosynthesis via mevalonate pathway. In terms of biological role, component of a hydro-lyase that catalyzes the dehydration of mevalonate 5-phosphate (MVA5P) to form trans-anhydromevalonate 5-phosphate (tAHMP). Involved in the archaeal mevalonate (MVA) pathway, which provides fundamental precursors for isoprenoid biosynthesis, such as isopentenyl diphosphate (IPP) and dimethylallyl diphosphate (DMAPP). The sequence is that of Phosphomevalonate dehydratase small subunit from Methanocaldococcus jannaschii (strain ATCC 43067 / DSM 2661 / JAL-1 / JCM 10045 / NBRC 100440) (Methanococcus jannaschii).